A 433-amino-acid polypeptide reads, in one-letter code: Trigger factor (433 aa).

The PPIase FKBP-type domain maps to glutamate 161–proline 246.

The protein belongs to the FKBP-type PPIase family. Tig subfamily.

The protein localises to the cytoplasm. The catalysed reaction is [protein]-peptidylproline (omega=180) = [protein]-peptidylproline (omega=0). Functionally, involved in protein export. Acts as a chaperone by maintaining the newly synthesized protein in an open conformation. Functions as a peptidyl-prolyl cis-trans isomerase. In Edwardsiella ictaluri (strain 93-146), this protein is Trigger factor.